A 306-amino-acid polypeptide reads, in one-letter code: Ubiquitin-conjugating enzyme E2Q-like protein CG4502 (306 aa).

Residues His-18–Gly-77 form a disordered region. 2 stretches are compositionally biased toward low complexity: residues Asn-22–Asn-41 and Asn-53–Gly-77. In terms of domain architecture, UBC core spans Ile-138–Val-299. The active-site Glycyl thioester intermediate is the Cys-234.

It belongs to the ubiquitin-conjugating enzyme family.

The enzyme catalyses S-ubiquitinyl-[E1 ubiquitin-activating enzyme]-L-cysteine + [E2 ubiquitin-conjugating enzyme]-L-cysteine = [E1 ubiquitin-activating enzyme]-L-cysteine + S-ubiquitinyl-[E2 ubiquitin-conjugating enzyme]-L-cysteine.. Its pathway is protein modification; protein ubiquitination. Its function is as follows. Catalyzes the covalent attachment of ubiquitin to other proteins. This Drosophila melanogaster (Fruit fly) protein is Ubiquitin-conjugating enzyme E2Q-like protein CG4502.